A 159-amino-acid chain; its full sequence is Phosphopantetheine adenylyltransferase (159 aa).

Ser-9 contributes to the substrate binding site. Residues 9-10 (SF) and His-17 each bind ATP. Residues Lys-41, Ile-73, and Lys-87 each coordinate substrate. ATP is bound by residues 88-90 (GLR), Glu-98, and 122-128 (WGYVSSS).

This sequence belongs to the bacterial CoaD family. As to quaternary structure, homohexamer. The cofactor is Mg(2+).

The protein localises to the cytoplasm. The catalysed reaction is (R)-4'-phosphopantetheine + ATP + H(+) = 3'-dephospho-CoA + diphosphate. Its pathway is cofactor biosynthesis; coenzyme A biosynthesis; CoA from (R)-pantothenate: step 4/5. Its function is as follows. Reversibly transfers an adenylyl group from ATP to 4'-phosphopantetheine, yielding dephospho-CoA (dPCoA) and pyrophosphate. The sequence is that of Phosphopantetheine adenylyltransferase from Nocardioides sp. (strain ATCC BAA-499 / JS614).